The sequence spans 167 residues: Large ribosomal subunit protein uL5 (167 aa).

This sequence belongs to the universal ribosomal protein uL5 family. In terms of assembly, part of the 50S ribosomal subunit; contacts the 5S rRNA and probably tRNA. Forms a bridge to the 30S subunit in the 70S ribosome.

This is one of the proteins that bind and probably mediate the attachment of the 5S RNA into the large ribosomal subunit, where it forms part of the central protuberance. In the 70S ribosome it contacts protein S13 of the 30S subunit (bridge B1b), connecting the 2 subunits; this bridge is implicated in subunit movement. May contact the P site tRNA; the 5S rRNA and some of its associated proteins might help stabilize positioning of ribosome-bound tRNAs. The chain is Large ribosomal subunit protein uL5 from Methanoculleus marisnigri (strain ATCC 35101 / DSM 1498 / JR1).